The sequence spans 376 residues: Probable allantoicase (376 aa).

This sequence belongs to the allantoicase family.

The catalysed reaction is allantoate + H2O = (S)-ureidoglycolate + urea. Its pathway is nitrogen metabolism; (S)-allantoin degradation; (S)-ureidoglycolate from allantoate (aminidohydrolase route): step 1/1. The polypeptide is Probable allantoicase (Streptomyces avermitilis (strain ATCC 31267 / DSM 46492 / JCM 5070 / NBRC 14893 / NCIMB 12804 / NRRL 8165 / MA-4680)).